Here is a 289-residue protein sequence, read N- to C-terminus: Delta-sarcoglycan (289 aa).

Residues 1 to 35 (MPQEQYTHHRSTMPGSVGPQVYKVGIYGWRKRCLY) lie on the Cytoplasmic side of the membrane. The helical; Signal-anchor for type II membrane protein transmembrane segment at 36–56 (FFVLLLMILILVNLAMTIWIL) threads the bilayer. Over 57 to 289 (KVMNFTIDGM…TCQINTSVCL (233 aa)) the chain is Extracellular. Asparagine 60 and asparagine 108 each carry an N-linked (GlcNAc...) asparagine glycan. 2 cysteine pairs are disulfide-bonded: cysteine 263-cysteine 288 and cysteine 265-cysteine 281. Asparagine 284 is a glycosylation site (N-linked (GlcNAc...) asparagine).

The protein belongs to the sarcoglycan beta/delta/gamma/zeta family. As to quaternary structure, interacts with FLNC and DAG1. Cross-link to form 2 major subcomplexes: one consisting of SGCB, SGCD and SGCG and the other consisting of SGCB and SGCD. The association between SGCB and SGCG is particularly strong while SGCA is loosely associated with the other sarcoglycans. Glycosylated. In terms of processing, disulfide bonds are present. In terms of tissue distribution, most strongly expressed in skeletal and cardiac muscle. Also detected in smooth muscle. Weak expression in brain and lung.

It is found in the cell membrane. Its subcellular location is the sarcolemma. The protein localises to the cytoplasm. The protein resides in the cytoskeleton. Functionally, component of the sarcoglycan complex, a subcomplex of the dystrophin-glycoprotein complex which forms a link between the F-actin cytoskeleton and the extracellular matrix. In Homo sapiens (Human), this protein is Delta-sarcoglycan (SGCD).